Reading from the N-terminus, the 134-residue chain is STAG3-like protein 3 (134 aa).

In terms of domain architecture, SCD spans 10-95 (PKVTCRDVLP…GCFKDWMVSM (86 aa)).

It belongs to the SCC3 family.

Its subcellular location is the nucleus. In Homo sapiens (Human), this protein is STAG3-like protein 3 (STAG3L3).